Here is a 141-residue protein sequence, read N- to C-terminus: Large ribosomal subunit protein uL11 (141 aa).

It belongs to the universal ribosomal protein uL11 family. In terms of assembly, part of the ribosomal stalk of the 50S ribosomal subunit. Interacts with L10 and the large rRNA to form the base of the stalk. L10 forms an elongated spine to which L12 dimers bind in a sequential fashion forming a multimeric L10(L12)X complex. In terms of processing, one or more lysine residues are methylated.

In terms of biological role, forms part of the ribosomal stalk which helps the ribosome interact with GTP-bound translation factors. This Campylobacter concisus (strain 13826) protein is Large ribosomal subunit protein uL11.